The sequence spans 386 residues: Ribonucleoside-diphosphate reductase subunit M2 (386 aa).

The span at 1 to 24 (MSSTRSPLKTKNENTISTKMNNMS) shows a compositional bias: polar residues. The disordered stretch occupies residues 1-36 (MSSTRSPLKTKNENTISTKMNNMSFVDKENTPPSLS). Ser-6 is modified (phosphoserine). Thr-31 bears the Phosphothreonine mark. Residues Asp-135, Glu-166, and His-169 each coordinate Fe cation. Tyr-173 is a catalytic residue. Glu-229, Glu-263, and His-266 together coordinate Fe cation.

Belongs to the ribonucleoside diphosphate reductase small chain family. As to quaternary structure, heterodimer of a large and a small subunit. Fe cation is required as a cofactor.

It is found in the cytoplasm. It catalyses the reaction a 2'-deoxyribonucleoside 5'-diphosphate + [thioredoxin]-disulfide + H2O = a ribonucleoside 5'-diphosphate + [thioredoxin]-dithiol. Its function is as follows. Provides the precursors necessary for DNA synthesis. Catalyzes the biosynthesis of deoxyribonucleotides from the corresponding ribonucleotides. The sequence is that of Ribonucleoside-diphosphate reductase subunit M2 (rrm2) from Danio rerio (Zebrafish).